Reading from the N-terminus, the 236-residue chain is Phosphoribosylaminoimidazole-succinocarboxamide synthase (236 aa).

It belongs to the SAICAR synthetase family.

The enzyme catalyses 5-amino-1-(5-phospho-D-ribosyl)imidazole-4-carboxylate + L-aspartate + ATP = (2S)-2-[5-amino-1-(5-phospho-beta-D-ribosyl)imidazole-4-carboxamido]succinate + ADP + phosphate + 2 H(+). The protein operates within purine metabolism; IMP biosynthesis via de novo pathway; 5-amino-1-(5-phospho-D-ribosyl)imidazole-4-carboxamide from 5-amino-1-(5-phospho-D-ribosyl)imidazole-4-carboxylate: step 1/2. The polypeptide is Phosphoribosylaminoimidazole-succinocarboxamide synthase (Campylobacter jejuni subsp. jejuni serotype O:2 (strain ATCC 700819 / NCTC 11168)).